The primary structure comprises 287 residues: Ferredoxin-type protein NapH (287 aa).

Residues 1-29 (MANRKRDAGREALEKKGWWRSHRWLVLRR) lie on the Cytoplasmic side of the membrane. The helical transmembrane segment at 30-50 (LCQFFVLGMFLSGPWFGVWIL) threads the bilayer. Over 51–79 (HGNYSSSLLFDTVPLTDPLMTLQSLASGH) the chain is Periplasmic. A helical transmembrane segment spans residues 80–100 (LPATVALTGAVIITVLYALAG). Residues 101 to 139 (KRLFCSWVCPLNPITDLANWLRRRFDLNQSATIPRHIRY) lie on the Cytoplasmic side of the membrane. The helical transmembrane segment at 140-160 (VLLVVILVGSALTGTLIWEWI) threads the bilayer. Residues 161–170 (NPVSLMGRSL) lie on the Periplasmic side of the membrane. Residues 171-191 (VMGFGSGALLILALFLFDLLV) traverse the membrane as a helical segment. Residues 192–287 (VEHGWCGHIC…TTRWSSGAKS (96 aa)) are Cytoplasmic-facing. 2 4Fe-4S ferredoxin-type domains span residues 217 to 247 (TVAA…APVL) and 251 to 280 (SPVQ…ITTR). Cys226, Cys229, Cys232, Cys236, Cys260, Cys263, Cys266, and Cys270 together coordinate [4Fe-4S] cluster.

In terms of assembly, interacts with NapC. [4Fe-4S] cluster is required as a cofactor.

It is found in the cell inner membrane. In terms of biological role, required for electron transfer from ubiquinol, via NapC, to the periplasmic nitrate reductase NapAB complex. The sequence is that of Ferredoxin-type protein NapH (napH) from Escherichia coli (strain K12).